We begin with the raw amino-acid sequence, 269 residues long: Surfeit locus protein 4 (269 aa).

6 consecutive transmembrane segments (helical) span residues 64–84 (FLAS…CILV), 92–112 (YACF…SILW), 157–177 (MQLG…HFDM), 179–199 (FFYI…AIGF), 203–223 (LAAL…NAFW), and 242–262 (TMSV…GVSM). The Di-lysine motif signature appears at 266–269 (KKEW).

The protein belongs to the SURF4 family.

Its subcellular location is the endoplasmic reticulum membrane. It localises to the endoplasmic reticulum-Golgi intermediate compartment membrane. It is found in the golgi apparatus membrane. Endoplasmic reticulum cargo receptor that mediates the export of lipoproteins by recruiting cargos into COPII vesicles to facilitate their secretion. Acts as a cargo receptor for lipoproteins bearing both APOB and APOA1, thereby regulating lipoprotein delivery and the maintenance of lipid homeostasis. This is Surfeit locus protein 4 from Gallus gallus (Chicken).